The following is a 369-amino-acid chain: Phospho-N-acetylmuramoyl-pentapeptide-transferase (369 aa).

10 helical membrane-spanning segments follow: residues Leu-30–Met-50, Gly-74–Trp-94, Leu-97–Phe-117, Ile-136–Ala-156, Tyr-177–Ala-197, Gly-208–Val-228, Gly-244–Trp-264, Ile-272–Ala-292, Ile-297–Val-317, and Thr-346–Leu-366.

It belongs to the glycosyltransferase 4 family. MraY subfamily. It depends on Mg(2+) as a cofactor.

It localises to the cell inner membrane. It carries out the reaction UDP-N-acetyl-alpha-D-muramoyl-L-alanyl-gamma-D-glutamyl-meso-2,6-diaminopimeloyl-D-alanyl-D-alanine + di-trans,octa-cis-undecaprenyl phosphate = di-trans,octa-cis-undecaprenyl diphospho-N-acetyl-alpha-D-muramoyl-L-alanyl-D-glutamyl-meso-2,6-diaminopimeloyl-D-alanyl-D-alanine + UMP. The protein operates within cell wall biogenesis; peptidoglycan biosynthesis. Catalyzes the initial step of the lipid cycle reactions in the biosynthesis of the cell wall peptidoglycan: transfers peptidoglycan precursor phospho-MurNAc-pentapeptide from UDP-MurNAc-pentapeptide onto the lipid carrier undecaprenyl phosphate, yielding undecaprenyl-pyrophosphoryl-MurNAc-pentapeptide, known as lipid I. The protein is Phospho-N-acetylmuramoyl-pentapeptide-transferase of Phenylobacterium zucineum (strain HLK1).